The primary structure comprises 79 residues: Serine protease inhibitor Kazal-type 1 (79 aa).

Residues 1–23 (MKVTGIFLLSALALLSLSGNTGA) form the signal peptide. The Kazal-like domain occupies 26–79 (LGREAKCYNELNGCTKIYDPVCGTDGNTYPNECVLCFENRKRQTSILIQKSGPC). 3 disulfides stabilise this stretch: Cys32–Cys61, Cys39–Cys58, and Cys47–Cys79.

It localises to the secreted. Its function is as follows. Serine protease inhibitor which exhibits anti-trypsin activity. In the pancreas, protects against trypsin-catalyzed premature activation of zymogens. Functionally, in the male reproductive tract, binds to sperm heads where it modulates sperm capacitance by inhibiting calcium uptake and nitrogen oxide (NO) production. The polypeptide is Serine protease inhibitor Kazal-type 1 (SPINK1) (Homo sapiens (Human)).